We begin with the raw amino-acid sequence, 506 residues long: Aldehyde dehydrogenase (506 aa).

Position 218–224 (218–224) interacts with NAD(+); the sequence is GFGLEAG. Active-site residues include glutamate 262 and cysteine 301.

This sequence belongs to the aldehyde dehydrogenase family.

It catalyses the reaction an aldehyde + NAD(+) + H2O = a carboxylate + NADH + 2 H(+). This Rhodospirillum rubrum (strain ATCC 11170 / ATH 1.1.1 / DSM 467 / LMG 4362 / NCIMB 8255 / S1) protein is Aldehyde dehydrogenase.